We begin with the raw amino-acid sequence, 249 residues long: Deoxyribose-phosphate aldolase (249 aa).

Asp94 serves as the catalytic Proton donor/acceptor. Catalysis depends on Lys158, which acts as the Schiff-base intermediate with acetaldehyde. The Proton donor/acceptor role is filled by Lys200.

This sequence belongs to the DeoC/FbaB aldolase family. DeoC type 1 subfamily.

The protein resides in the cytoplasm. The catalysed reaction is 2-deoxy-D-ribose 5-phosphate = D-glyceraldehyde 3-phosphate + acetaldehyde. Its pathway is carbohydrate degradation; 2-deoxy-D-ribose 1-phosphate degradation; D-glyceraldehyde 3-phosphate and acetaldehyde from 2-deoxy-alpha-D-ribose 1-phosphate: step 2/2. Catalyzes a reversible aldol reaction between acetaldehyde and D-glyceraldehyde 3-phosphate to generate 2-deoxy-D-ribose 5-phosphate. The protein is Deoxyribose-phosphate aldolase of Thermoplasma volcanium (strain ATCC 51530 / DSM 4299 / JCM 9571 / NBRC 15438 / GSS1).